Consider the following 187-residue polypeptide: Elongation factor P (187 aa).

The residue at position 34 (K34) is an N6-(3,6-diaminohexanoyl)-5-hydroxylysine.

This sequence belongs to the elongation factor P family. In terms of processing, may be beta-lysylated on the epsilon-amino group of Lys-34 by the combined action of EpmA and EpmB, and then hydroxylated on the C5 position of the same residue by EpmC (if this protein is present). Lysylation is critical for the stimulatory effect of EF-P on peptide-bond formation. The lysylation moiety may extend toward the peptidyltransferase center and stabilize the terminal 3-CCA end of the tRNA. Hydroxylation of the C5 position on Lys-34 may allow additional potential stabilizing hydrogen-bond interactions with the P-tRNA.

The protein localises to the cytoplasm. It participates in protein biosynthesis; polypeptide chain elongation. Its function is as follows. Involved in peptide bond synthesis. Alleviates ribosome stalling that occurs when 3 or more consecutive Pro residues or the sequence PPG is present in a protein, possibly by augmenting the peptidyl transferase activity of the ribosome. Modification of Lys-34 is required for alleviation. This chain is Elongation factor P, found in Vesicomyosocius okutanii subsp. Calyptogena okutanii (strain HA).